The primary structure comprises 163 residues: Phospholipase A2 homolog 3 (163 aa).

The first 43 residues, 1 to 43 (MARGGSFSRLRLRAGVVVAAAAAALLLFAVVAPPAAALNIGLQ), serve as a signal peptide directing secretion. 6 cysteine pairs are disulfide-bonded: C55/C83, C59/C89, C64/C137, C76/C96, C95/C121, and C102/C114. Ca(2+) is bound by residues Y75, G77, and Y80. The active site involves H99. D100 is a Ca(2+) binding site.

This sequence belongs to the phospholipase A2 family. Requires Ca(2+) as cofactor.

The protein localises to the secreted. It carries out the reaction a 1,2-diacyl-sn-glycero-3-phosphocholine + H2O = a 1-acyl-sn-glycero-3-phosphocholine + a fatty acid + H(+). Inhibited by EGTA. PA2 catalyzes the calcium-dependent hydrolysis of the 2-acyl groups in 3-sn-phosphoglycerides. Releases lysophospholipids (LPLs) and free fatty acids (FFAs) from membrane phospholipids in response to hormones and other external stimuli. This chain is Phospholipase A2 homolog 3 (PLA2-III), found in Oryza sativa subsp. japonica (Rice).